A 381-amino-acid polypeptide reads, in one-letter code: NF-kappa-B inhibitor-like protein 1 (381 aa).

The disordered stretch occupies residues 1–32; it reads MSNPSPQAPEEEASTSVCRPQSSMASVSRRHR. Polar residues predominate over residues 14–26; the sequence is STSVCRPQSSMAS. ANK repeat units lie at residues 64–93 and 97–133; these read GQPP…DPAH and HGDT…IKNK. Disordered stretches follow at residues 129–166, 186–242, and 257–294; these read GIKN…REWR, DDAS…QEEE, and LCES…RGSL. Serine 150 bears the Phosphoserine mark. Over residues 150–159 the composition is skewed to acidic residues; the sequence is SAEEEEDEEV. 2 stretches are compositionally biased toward basic and acidic residues: residues 204-228 and 257-270; these read RLAR…RPPR and LCES…EAQG.

Interacts with CACTIN (via N-terminal domain); the interaction occurs in a pro-inflammatory-independent manner.

It is found in the nucleus. In terms of biological role, involved in the regulation of innate immune response. Acts as negative regulator of Toll-like receptor and interferon-regulatory factor (IRF) signaling pathways. Contributes to the negative regulation of transcriptional activation of NF-kappa-B target genes in response to endogenous pro-inflammatory stimuli. This is NF-kappa-B inhibitor-like protein 1 (Nfkbil1) from Rattus norvegicus (Rat).